A 137-amino-acid polypeptide reads, in one-letter code: Keratin-associated protein 15-1 (137 aa).

The protein belongs to the PMG family. Interacts with hair keratins.

Functionally, in the hair cortex, hair keratin intermediate filaments are embedded in an interfilamentous matrix, consisting of hair keratin-associated proteins (KRTAP), which are essential for the formation of a rigid and resistant hair shaft through their extensive disulfide bond cross-linking with abundant cysteine residues of hair keratins. The matrix proteins include the high-sulfur and high-glycine-tyrosine keratins. The chain is Keratin-associated protein 15-1 (KRTAP15-1) from Homo sapiens (Human).